The sequence spans 1102 residues: DNA-directed RNA polymerase subunit beta (1102 aa).

The tract at residues 1076–1102 (IDSQRRAPNRPTYESLHTEEDLEEEEV) is disordered.

It belongs to the RNA polymerase beta chain family. In cyanobacteria the RNAP catalytic core is composed of 2 alpha, 1 beta, 1 beta', 1 gamma and 1 omega subunit. When a sigma factor is associated with the core the holoenzyme is formed, which can initiate transcription.

It catalyses the reaction RNA(n) + a ribonucleoside 5'-triphosphate = RNA(n+1) + diphosphate. Its function is as follows. DNA-dependent RNA polymerase catalyzes the transcription of DNA into RNA using the four ribonucleoside triphosphates as substrates. The protein is DNA-directed RNA polymerase subunit beta of Synechocystis sp. (strain ATCC 27184 / PCC 6803 / Kazusa).